Consider the following 1123-residue polypeptide: Leucine--tRNA ligase, cytoplasmic (1123 aa).

The 'HIGH' region motif lies at 84 to 94 (PYMNGRLHAGH). A 'KMSKS' region motif is present at residues 757 to 761 (KMSKS). K760 contributes to the ATP binding site.

This sequence belongs to the class-I aminoacyl-tRNA synthetase family.

The protein resides in the cytoplasm. The enzyme catalyses tRNA(Leu) + L-leucine + ATP = L-leucyl-tRNA(Leu) + AMP + diphosphate. In Neurospora crassa (strain ATCC 24698 / 74-OR23-1A / CBS 708.71 / DSM 1257 / FGSC 987), this protein is Leucine--tRNA ligase, cytoplasmic (leu-6).